The chain runs to 129 residues: Glycine cleavage system H protein (129 aa).

The Lipoyl-binding domain occupies 24–106 (LLKIGVSEFA…IGDGWLVILK (83 aa)). Lys65 carries the N6-lipoyllysine modification.

It belongs to the GcvH family. In terms of assembly, the glycine cleavage system is composed of four proteins: P, T, L and H. It depends on (R)-lipoate as a cofactor.

The glycine cleavage system catalyzes the degradation of glycine. The H protein shuttles the methylamine group of glycine from the P protein to the T protein. The polypeptide is Glycine cleavage system H protein (Prochlorococcus marinus (strain MIT 9301)).